A 244-amino-acid polypeptide reads, in one-letter code: Phosphoadenosine 5'-phosphosulfate reductase (244 aa).

The Nucleophile; cysteine thiosulfonate intermediate role is filled by cysteine 239.

This sequence belongs to the PAPS reductase family. CysH subfamily.

The protein resides in the cytoplasm. It carries out the reaction [thioredoxin]-disulfide + sulfite + adenosine 3',5'-bisphosphate + 2 H(+) = [thioredoxin]-dithiol + 3'-phosphoadenylyl sulfate. It functions in the pathway sulfur metabolism; hydrogen sulfide biosynthesis; sulfite from sulfate: step 3/3. In terms of biological role, catalyzes the formation of sulfite from phosphoadenosine 5'-phosphosulfate (PAPS) using thioredoxin as an electron donor. The protein is Phosphoadenosine 5'-phosphosulfate reductase of Salmonella typhi.